The sequence spans 64 residues: Potassium channel toxin kappa-KTx 3.4 (64 aa).

The signal sequence occupies residues 1–26; that stretch reads MKSTLMTASLLILVLLSIIDYASVYA. Residues 27 to 36 constitute a propeptide that is removed on maturation; it reads EFIDSEISLE. 2 disulfides stabilise this stretch: Cys43/Cys61 and Cys47/Cys57.

The protein belongs to the short scorpion toxin superfamily. Potassium channel inhibitor kappa-KTx family. Kappa-KTx 3 subfamily. Expressed by the venom gland.

The protein localises to the secreted. Its function is as follows. Potassium channel inhibitor (Kv). This Heterometrus petersii (Asian forest scorpion) protein is Potassium channel toxin kappa-KTx 3.4.